The sequence spans 100 residues: Small ribosomal subunit protein uS14c (100 aa).

The protein belongs to the universal ribosomal protein uS14 family. In terms of assembly, part of the 30S ribosomal subunit.

It is found in the plastid. The protein resides in the chloroplast. Binds 16S rRNA, required for the assembly of 30S particles. The sequence is that of Small ribosomal subunit protein uS14c from Lotus japonicus (Lotus corniculatus var. japonicus).